The primary structure comprises 401 residues: Thermophilic serine proteinase (401 aa).

The N-terminal stretch at 1-24 (MKFKAIVSLSLAVSMSLFPFLVEA) is a signal peptide. A propeptide spanning residues 25 to 121 (ASNDGVESPK…AEPNYLFNAA (97 aa)) is cleaved from the precursor. D126 lines the Ca(2+) pocket. Positions 133 to 399 (QYGPQNTYTD…YGRINSYNAV (267 aa)) constitute a Peptidase S8 domain. Residue D160 is the Charge relay system of the active site. Positions 168, 169, 171, 179, 184, and 186 each coordinate Ca(2+). The Charge relay system role is filled by H193. Positions 204, 207, 209, and 211 each coordinate Ca(2+). C258 and C260 are oxidised to a cystine. Na(+)-binding residues include Y297, V300, and D323. Residue S347 is the Charge relay system of the active site.

The protein belongs to the peptidase S8 family. Requires Ca(2+) as cofactor. Na(+) is required as a cofactor.

It is found in the secreted. The chain is Thermophilic serine proteinase from Bacillus sp. (strain AK1).